Reading from the N-terminus, the 332-residue chain is Ferredoxin--NADP reductase (332 aa).

Residues glutamate 35, glutamine 43, tyrosine 48, valine 88, phenylalanine 122, aspartate 286, and serine 326 each contribute to the FAD site.

This sequence belongs to the ferredoxin--NADP reductase type 2 family. As to quaternary structure, homodimer. It depends on FAD as a cofactor.

The enzyme catalyses 2 reduced [2Fe-2S]-[ferredoxin] + NADP(+) + H(+) = 2 oxidized [2Fe-2S]-[ferredoxin] + NADPH. The protein is Ferredoxin--NADP reductase of Limosilactobacillus reuteri (strain DSM 20016) (Lactobacillus reuteri).